A 594-amino-acid chain; its full sequence is MNNSITDSVEKKPEQVSFEVQPNALRPVAFHVFTRKYDLNINRDSLQELASFVSKKCGSQWRSQCEPLLDEIAKTWKRVHETQPIVTRPLLIPVLANLNVPHEVRVSSLARVQTLETTGSFLNSSNSEIRETIKNEKYFRVLDAFKMPKFKYDSSRKVFVLSKQSPTLMASASACTDMLNRRFNVVYSRILRNESFQTPSFSGSFSQTGTYQLTPIRNLLGRAGNTFLLFGLLTIAPDGTLWLEDLDSQVQLDVSQAEQGFGLFCPGCLVLVNGQFLSSGLFLVFELGHPPIERRDASLKALNNLDILGLNMDAKQLALLRHAEQAYQSQAFVCISEVHLDNHQTFYALEKIFQKYESSEAVPFCIILCGSFMSSAFHNSGSSIQYKEGFNKLAASLEKFPKICEKTKFIFVPGPNDPWTTNGISLMPKHSIPLHFVNRIQRVCKHTIFASNPCRIIFFSQEVLIYRDDISGRFQRNSLKFGKTPQGTSNINSIPLAEQQVHQQRKLVKTVLDQSHLSPFPSRTRPILWDFDYALSVFPLPSCMGLIDSESSAFDVHYGGCPTFNPGALLLGVHYNWQEVFPVKKEIITHKERI.

This sequence belongs to the DNA polymerase epsilon subunit B family. As to quaternary structure, heterotetramer. Consists of four subunits: pol2, dpb2, dpb3 and dpb4. Interacts with dpb3.

Its subcellular location is the nucleus. Functionally, as accessory component of the DNA polymerase epsilon (DNA polymerase II) participates in chromosomal DNA replication. The polypeptide is DNA polymerase epsilon subunit B (dpb2) (Schizosaccharomyces pombe (strain 972 / ATCC 24843) (Fission yeast)).